Reading from the N-terminus, the 275-residue chain is Phosphate import ATP-binding protein PstB 1 (275 aa).

Residues 22–261 (IETRDLSVYY…DRTEKIFNSP (240 aa)) form the ABC transporter domain. 54–61 (GPSGCGKS) is a binding site for ATP.

Belongs to the ABC transporter superfamily. Phosphate importer (TC 3.A.1.7) family. As to quaternary structure, the complex is composed of two ATP-binding proteins (PstB), two transmembrane proteins (PstC and PstA) and a solute-binding protein (PstS).

It localises to the cell inner membrane. The enzyme catalyses phosphate(out) + ATP + H2O = ADP + 2 phosphate(in) + H(+). In terms of biological role, part of the ABC transporter complex PstSACB involved in phosphate import. Responsible for energy coupling to the transport system. This chain is Phosphate import ATP-binding protein PstB 1, found in Synechococcus sp. (strain JA-3-3Ab) (Cyanobacteria bacterium Yellowstone A-Prime).